Here is a 141-residue protein sequence, read N- to C-terminus: Nucleoside diphosphate kinase (141 aa).

The ATP site is built by Lys11, Phe59, Arg87, Thr93, Arg104, and Asn114. Residue His117 is the Pros-phosphohistidine intermediate of the active site.

The protein belongs to the NDK family. In terms of assembly, homotetramer. Mg(2+) is required as a cofactor.

The protein localises to the cytoplasm. The enzyme catalyses a 2'-deoxyribonucleoside 5'-diphosphate + ATP = a 2'-deoxyribonucleoside 5'-triphosphate + ADP. It carries out the reaction a ribonucleoside 5'-diphosphate + ATP = a ribonucleoside 5'-triphosphate + ADP. In terms of biological role, major role in the synthesis of nucleoside triphosphates other than ATP. The ATP gamma phosphate is transferred to the NDP beta phosphate via a ping-pong mechanism, using a phosphorylated active-site intermediate. This chain is Nucleoside diphosphate kinase, found in Stenotrophomonas maltophilia (strain R551-3).